The sequence spans 158 residues: MTVQLSNLEHLPNYQITERLDVVYGSTVRSKHVGKDLFAGLKNIVGGELTAYTELLEESRQEAIDRMIVKAEALGADAVVGLRFSTSSIAQGASELFVYGTAVKAVPMQQQPIYQSSNQPPSHHSGHSQYEEPVPSAAQPSTTAQANDDLPRFNPFGE.

Over residues 113–122 the composition is skewed to polar residues; that stretch reads IYQSSNQPPS. The interval 113–158 is disordered; that stretch reads IYQSSNQPPSHHSGHSQYEEPVPSAAQPSTTAQANDDLPRFNPFGE.

The protein belongs to the UPF0145 family.

In Psychrobacter arcticus (strain DSM 17307 / VKM B-2377 / 273-4), this protein is UPF0145 protein Psyc_1853.